The primary structure comprises 146 residues: Hemoglobin subunit beta (146 aa).

At valine 1 the chain carries N-acetylvaline. Positions 2–146 (HLTDAEKALV…VATALAHKYH (145 aa)) constitute a Globin domain. The residue at position 12 (threonine 12) is a Phosphothreonine. At serine 44 the chain carries Phosphoserine. An N6-acetyllysine modification is found at lysine 59. Histidine 63 contributes to the heme b binding site. Lysine 82 bears the N6-acetyllysine mark. Histidine 92 contacts heme b. At cysteine 93 the chain carries S-nitrosocysteine. At lysine 144 the chain carries N6-acetyllysine.

It belongs to the globin family. In terms of assembly, heterotetramer of two alpha chains and two beta chains. As to expression, red blood cells.

Its function is as follows. Involved in oxygen transport from the lung to the various peripheral tissues. The protein is Hemoglobin subunit beta of Peromyscus crinitus (Canyon mouse).